Consider the following 345-residue polypeptide: Phosphoribosylformylglycinamidine cyclo-ligase (345 aa).

The protein belongs to the AIR synthase family.

Its subcellular location is the cytoplasm. The catalysed reaction is 2-formamido-N(1)-(5-O-phospho-beta-D-ribosyl)acetamidine + ATP = 5-amino-1-(5-phospho-beta-D-ribosyl)imidazole + ADP + phosphate + H(+). Its pathway is purine metabolism; IMP biosynthesis via de novo pathway; 5-amino-1-(5-phospho-D-ribosyl)imidazole from N(2)-formyl-N(1)-(5-phospho-D-ribosyl)glycinamide: step 2/2. This chain is Phosphoribosylformylglycinamidine cyclo-ligase, found in Escherichia coli O7:K1 (strain IAI39 / ExPEC).